Reading from the N-terminus, the 291-residue chain is 29 kDa ribonucleoprotein B, chloroplastic (291 aa).

The region spanning 87 to 165 is the RRM 1 domain; it reads LKLFVGNLPF…RAIRVNAGPA (79 aa). The tract at residues 164–202 is disordered; that stretch reads PAPAKRENSSFGGGRGGNSSYGGGRDGNSSFGGARGGRS. The tract at residues 166–206 is linker (Gly-rich); it reads PAKRENSSFGGGRGGNSSYGGGRDGNSSFGGARGGRSVDSS. The span at 174 to 189 shows a compositional bias: gly residues; the sequence is FGGGRGGNSSYGGGRD. An RRM 2 domain is found at 207–285; sequence NRVYVGNLSW…RSIRVSAAEE (79 aa).

Its subcellular location is the plastid. The protein localises to the chloroplast. Its function is as follows. Could be involved in splicing and/or processing of chloroplast RNA's. The chain is 29 kDa ribonucleoprotein B, chloroplastic from Nicotiana sylvestris (Wood tobacco).